A 652-amino-acid chain; its full sequence is MSNESLANLLKEERRFAPPADLAANANVTAEAYEQAKADRLGFWAEQARRLTWATEPTETLDWSNPPFAKWFKDGKLNVAYNCVDRHVEAGHGDRVAIHFEGEPGDSRAITYAELKDEVSKAANALTELGVQKGDRVAVYLPMIPEAVVAMLACARIGAAHSVVFGGFSADAIAARIKDADAKLVITADGGYRRGKPSALKPAVDDAVSRGDGVEKVLVVRRTGQEVAWTEGRDVWWHEITAKQSAEHTPEAFDAEHPLFILYTSGTTGKPKGILHTSGGYLTQTSYTHHAVFDLKPETDVYWCTADIGWVTGHSYITYGPLSNGATQVMYEGTPDTPHQGRFWEIVQKYGVTILYTAPTAIRTFMKWGDDIPAKFDLSSLRVLGSVGEPINPEAWIWYRKHIGGDRTPIVDTWWQTETGAMMISPLPGVTETKPGSAQRPLPGISATVVDDEAREVPNGGGGYLVLTEPWPSMLRTIWGDDQRFLDTYWSRFEGKYFAGDGAKKDEDGDIWLLGRVDDVMLVSGHNISTTEVESALVSHPSVAEAAVVGAADETTGQAIVAFVILRGTANAEDDNLVADLRNHVGTTLGPIAKPKRILPVAELPKTRSGKIMRRLLRDVAENRALGDVTTLTDSSVMDLIQSKLPAAPSED.

CoA is bound by residues 193-196 (RRGK) and T312. ATP is bound by residues 388–390 (GEP), 412–417 (DTWWQT), D501, and R516. S524 contacts CoA. Residues V538, H540, and V543 each contribute to the Mg(2+) site. At K611 the chain carries N6-acetyllysine.

It belongs to the ATP-dependent AMP-binding enzyme family. The cofactor is Mg(2+). In terms of processing, acetylated. Deacetylation by the SIR2-homolog deacetylase activates the enzyme.

The catalysed reaction is acetate + ATP + CoA = acetyl-CoA + AMP + diphosphate. Catalyzes the conversion of acetate into acetyl-CoA (AcCoA), an essential intermediate at the junction of anabolic and catabolic pathways. AcsA undergoes a two-step reaction. In the first half reaction, AcsA combines acetate with ATP to form acetyl-adenylate (AcAMP) intermediate. In the second half reaction, it can then transfer the acetyl group from AcAMP to the sulfhydryl group of CoA, forming the product AcCoA. The polypeptide is Acetyl-coenzyme A synthetase (Streptomyces avermitilis (strain ATCC 31267 / DSM 46492 / JCM 5070 / NBRC 14893 / NCIMB 12804 / NRRL 8165 / MA-4680)).